Reading from the N-terminus, the 475-residue chain is Trigger factor (475 aa).

Residues 165-250 (GDRVTIDYLG…VKAVFRPDEL (86 aa)) form the PPIase FKBP-type domain. The segment covering 439-466 (EYDETDVPEEKPAKKKSAVKEKSAEKTS) has biased composition (basic and acidic residues). The segment at 439 to 475 (EYDETDVPEEKPAKKKSAVKEKSAEKTSAKKKAPKKA) is disordered.

It belongs to the FKBP-type PPIase family. Tig subfamily.

Its subcellular location is the cytoplasm. It catalyses the reaction [protein]-peptidylproline (omega=180) = [protein]-peptidylproline (omega=0). Functionally, involved in protein export. Acts as a chaperone by maintaining the newly synthesized protein in an open conformation. Functions as a peptidyl-prolyl cis-trans isomerase. This Bartonella tribocorum (strain CIP 105476 / IBS 506) protein is Trigger factor.